The sequence spans 601 residues: Terpinolene synthase, chloroplastic (601 aa).

A chloroplast-targeting transit peptide spans 1 to 32; that stretch reads MSTFVISNSMHVGISFSFLHKLPQTPPPQVVC. Residues D354, D358, D498, T502, and E506 each contribute to the Mg(2+) site. Positions 354–358 match the DDXXD motif motif; that stretch reads DDVYD.

Belongs to the terpene synthase family. Tpsd subfamily. The cofactor is Mg(2+). Mn(2+) is required as a cofactor.

It localises to the plastid. The protein localises to the chloroplast. It carries out the reaction (2E)-geranyl diphosphate = terpinolene + diphosphate. The protein operates within secondary metabolite biosynthesis; terpenoid biosynthesis. Monoterpene synthase that catalyzes the formation of terpinolene and other monoterpenes from geranyl diphosphate. This chain is Terpinolene synthase, chloroplastic (TES), found in Ocimum basilicum (Sweet basil).